A 109-amino-acid chain; its full sequence is Small ribosomal subunit protein uS17 (109 aa).

The protein belongs to the universal ribosomal protein uS17 family. Part of the 30S ribosomal subunit.

In terms of biological role, one of the primary rRNA binding proteins, it binds specifically to the 5'-end of 16S ribosomal RNA. The polypeptide is Small ribosomal subunit protein uS17 (Methanosarcina mazei (strain ATCC BAA-159 / DSM 3647 / Goe1 / Go1 / JCM 11833 / OCM 88) (Methanosarcina frisia)).